The chain runs to 275 residues: Elongation factor Ts (275 aa).

An involved in Mg(2+) ion dislocation from EF-Tu region spans residues 80–83; sequence TDFV.

Belongs to the EF-Ts family.

The protein localises to the cytoplasm. In terms of biological role, associates with the EF-Tu.GDP complex and induces the exchange of GDP to GTP. It remains bound to the aminoacyl-tRNA.EF-Tu.GTP complex up to the GTP hydrolysis stage on the ribosome. This chain is Elongation factor Ts, found in Clavibacter sepedonicus (Clavibacter michiganensis subsp. sepedonicus).